Consider the following 709-residue polypeptide: Protein IMPAIRED IN BABA-INDUCED STERILITY 1 (709 aa).

Gly-2 is lipidated: N-myristoyl glycine. The segment at Ser-53 to Ser-80 is disordered. In terms of domain architecture, Protein kinase spans Phe-131–Phe-418. ATP contacts are provided by residues Ile-137–Val-145 and Lys-160. Residue Asp-255 is the Proton acceptor of the active site. Disordered stretches follow at residues Ser-434–Gly-536 and Ser-566–Glu-609. A compositionally biased stretch (basic and acidic residues) spans Lys-437–Arg-449. Over residues His-484 to His-494 the composition is skewed to basic residues. Over residues Ser-495 to Thr-505 the composition is skewed to polar residues. 2 stretches are compositionally biased toward basic and acidic residues: residues Lys-509–His-523 and Val-586–Glu-609.

Belongs to the protein kinase superfamily. Ser/Thr protein kinase family.

Functionally, required for beta-aminobutyric acid (BABA)-induced resistance (BABA-IR) against bacteria (e.g. P.syringae) and oomycetes (e.g. H.parasitica) via priming for salicylate (SA)-dependent defense responses such as pathogenesis-related PR-1 gene expression and trailing necrosis. Involved in BABA-mediated sterility. Necessary for the inheritance of BABA-priming to next generation, especially for the primed to be primed phenotype which consists in an enhanced second BABA-priming in transgenerationally primed plants. This chain is Protein IMPAIRED IN BABA-INDUCED STERILITY 1, found in Arabidopsis thaliana (Mouse-ear cress).